The following is a 492-amino-acid chain: Protein adenylyltransferase Fic (492 aa).

The span at 1–17 shows a compositional bias: low complexity; it reads MCMEAEPPSPPAQQQEQ. The disordered stretch occupies residues 1–21; it reads MCMEAEPPSPPAQQQEQVNPP. The chain crosses the membrane as a helical span at residues 33–55; the sequence is LYRLVLLFVAGSLAAWTFHALSS. TPR repeat units lie at residues 118–151 and 152–186; these read ALGA…APRH and PEVL…SPSN. The Inhibitory (S/T)XXXE(G/N) motif signature appears at 243 to 248; it reads SVGIEG. Residues glutamate 247 and 328-331 each bind ATP; that span reads VGGH. The Fido domain maps to 297 to 432; the sequence is ITIKDILELH…IRPFVRFIAD (136 aa). Histidine 375 is an active-site residue. ATP is bound by residues 379-386, 411-412, and asparagine 419; these read DGNGRTSR and YY.

Belongs to the fic family. Homodimer.

It is found in the membrane. The catalysed reaction is L-tyrosyl-[protein] + ATP = O-(5'-adenylyl)-L-tyrosyl-[protein] + diphosphate. It carries out the reaction L-threonyl-[protein] + ATP = 3-O-(5'-adenylyl)-L-threonyl-[protein] + diphosphate. The enzyme catalyses 3-O-(5'-adenylyl)-L-threonyl-[protein] + H2O = L-threonyl-[protein] + AMP + H(+). Its activity is regulated as follows. The side chain of Glu-247 determines which of the two opposing activities (AMPylase or de-AMPylase) will take place. In response to endoplasmic reticulum stress, mediates de-AMPylase activity. Adenylyltransferase activity is inhibited by the inhibitory helix present at the N-terminus: Glu-247 binds ATP and competes with ATP-binding at Arg-386, thereby preventing adenylyltransferase activity. In unstressed cells, disengagement of Glu-247 promotes adenylyltransferase activity. Activation dissociates ATP-binding from Glu-247, allowing ordered binding of the entire ATP moiety with the alpha-phosphate in an orientation that is productive for accepting an incoming target hydroxyl side chain. Its function is as follows. Protein that can both mediate the addition of adenosine 5'-monophosphate (AMP) to specific residues of target proteins (AMPylation), and the removal of the same modification from target proteins (de-AMPylation), depending on the context. The side chain of Glu-247 determines which of the two opposing activities (AMPylase or de-AMPylase) will take place. Acts as a key regulator of the unfolded protein response (UPR) by mediating AMPylation or de-AMPylation of Hsc70-3/BiP. In unstressed cells, acts as an adenylyltransferase by mediating AMPylation of Hsc70-3/BiP at 'Thr-518', thereby inactivating it. In response to endoplasmic reticulum stress, acts as a phosphodiesterase by mediating removal of ATP (de-AMPylation) from Hsc70-3/BiP at 'Thr-518', leading to restore HSPA5/BiP activity. In Drosophila simulans (Fruit fly), this protein is Protein adenylyltransferase Fic.